Reading from the N-terminus, the 104-residue chain is Defensin-2 (104 aa).

Positions 1–19 (MKFFVLFAILIAIVHASCA) are cleaved as a signal peptide. Cystine bridges form between Cys-64–Cys-95, Cys-81–Cys-100, and Cys-85–Cys-102.

This sequence belongs to the invertebrate defensin family. Type 1 subfamily. As to expression, low expression in head and thorax.

It localises to the secreted. Functionally, antibacterial peptide mostly active against Gram-positive bacteria. The polypeptide is Defensin-2 (Apis mellifera (Honeybee)).